The following is a 252-amino-acid chain: 5'-nucleotidase SurE (252 aa).

A divalent metal cation is bound by residues Asp-8, Asp-9, Ser-39, and Asn-95.

This sequence belongs to the SurE nucleotidase family. It depends on a divalent metal cation as a cofactor.

Its subcellular location is the cytoplasm. It carries out the reaction a ribonucleoside 5'-phosphate + H2O = a ribonucleoside + phosphate. Functionally, nucleotidase that shows phosphatase activity on nucleoside 5'-monophosphates. The sequence is that of 5'-nucleotidase SurE from Clostridium botulinum (strain Loch Maree / Type A3).